The following is a 190-amino-acid chain: RNA-binding protein OPG065 (190 aa).

In terms of domain architecture, Z-binding spans 5–70 (YIDERSDAEI…DIPPRWFMTT (66 aa)). The region spanning 117 to 184 (NPVTIINEYC…AKLAVDKLLG (68 aa)) is the DRBM domain.

It belongs to the orthopoxvirus OPG065 family. As to quaternary structure, interacts with host G1P2/ISG15. Interacts with host EIF2AK2/PKR. Interacts with host ZBP1.

Functionally, RNA-binding protein that plays a role in the inhibition of multiple cellular antiviral responses activated by double-stranded RNA (dsRNA), such as inhibition of PKR activation, necroptosis, and IFN-mediated antiviral activities. Recognizes and binds Z-RNA structures via its Z-binding domain and dsRNA via its DRBM domain: RNA-binding activity is required to escape host ZBP1-dependent necroptosis. Mechanistically, the Z-binding domain binds Z-RNAs that are produced during vaccinia virus infection, thereby competing with Z-RNA detection by host ZBP1, suppressing ZBP1-dependent necroptosis. Acts as a key inhibitor of the interferon response by blocking the phosphorylation and subsequent activation of IRF3 and IRF7 kinases that are required for interferon-alpha gene expression. Inhibits NF-kappa-B activation and the ubiquitin-like protein ISG15, which is an early antiviral protein. The binding with host ISG15 subsequently blocks host ISGylation. This Homo sapiens (Human) protein is RNA-binding protein OPG065 (OPG065).